The sequence spans 164 residues: Thiol peroxidase (164 aa).

The 147-residue stretch at 16-162 (LQVGEIAHDF…YDAAIEAVKV (147 aa)) folds into the Thioredoxin domain. Cys-58 (cysteine sulfenic acid (-SOH) intermediate) is an active-site residue. Cys-58 and Cys-92 are oxidised to a cystine.

The protein belongs to the peroxiredoxin family. Tpx subfamily. In terms of assembly, homodimer.

It catalyses the reaction a hydroperoxide + [thioredoxin]-dithiol = an alcohol + [thioredoxin]-disulfide + H2O. Thiol-specific peroxidase that catalyzes the reduction of hydrogen peroxide and organic hydroperoxides to water and alcohols, respectively. Plays a role in cell protection against oxidative stress by detoxifying peroxides. The sequence is that of Thiol peroxidase from Streptococcus parasanguinis.